We begin with the raw amino-acid sequence, 211 residues long: MRIRVKICGITRLEDAMAAVQHGADAIGFILWPQSERYISPEEAGRIVKCLPPFVRAVGVYVNPDKSWVEETSATAGLDLLQFHGDESADFCSRFHLPYIKAVRVRDGLDLLQYAQHYAGARGLLLDAYTAGIPGGTGHVFDWKLIPAELPLPWILSGGLHPGNITDAIGQTHLSAIDVSSGVEVAKGIKDVNKISAFMQRVRSCEDVRSS.

This sequence belongs to the TrpF family.

It carries out the reaction N-(5-phospho-beta-D-ribosyl)anthranilate = 1-(2-carboxyphenylamino)-1-deoxy-D-ribulose 5-phosphate. Its pathway is amino-acid biosynthesis; L-tryptophan biosynthesis; L-tryptophan from chorismate: step 3/5. The polypeptide is N-(5'-phosphoribosyl)anthranilate isomerase (Nitrosomonas europaea (strain ATCC 19718 / CIP 103999 / KCTC 2705 / NBRC 14298)).